Here is a 209-residue protein sequence, read N- to C-terminus: Uracil phosphoribosyltransferase (209 aa).

5-phospho-alpha-D-ribose 1-diphosphate is bound by residues arginine 79, arginine 104, and 131 to 139 (DPMLATGGS). Residues isoleucine 194 and 199 to 201 (GDA) each bind uracil. Aspartate 200 contributes to the 5-phospho-alpha-D-ribose 1-diphosphate binding site.

The protein belongs to the UPRTase family. Mg(2+) is required as a cofactor.

It carries out the reaction UMP + diphosphate = 5-phospho-alpha-D-ribose 1-diphosphate + uracil. It functions in the pathway pyrimidine metabolism; UMP biosynthesis via salvage pathway; UMP from uracil: step 1/1. With respect to regulation, allosterically activated by GTP. In terms of biological role, catalyzes the conversion of uracil and 5-phospho-alpha-D-ribose 1-diphosphate (PRPP) to UMP and diphosphate. The protein is Uracil phosphoribosyltransferase of Latilactobacillus sakei (Lactobacillus sakei).